The sequence spans 221 residues: Protein Thf1 (221 aa).

The stretch at 174–213 forms a coiled coil; that stretch reads TKERVEKDVNLYKSSLDKIEKALELIEMNIKDEKRRNKER.

The protein belongs to the THF1 family.

May be involved in photosynthetic membrane biogenesis. The chain is Protein Thf1 from Prochlorococcus marinus (strain MIT 9211).